A 308-amino-acid chain; its full sequence is Ribosomal RNA small subunit methyltransferase H (308 aa).

S-adenosyl-L-methionine-binding positions include 34 to 36, Asp54, Phe85, Asp99, and Gln106; that span reads GGH.

Belongs to the methyltransferase superfamily. RsmH family.

The protein localises to the cytoplasm. The catalysed reaction is cytidine(1402) in 16S rRNA + S-adenosyl-L-methionine = N(4)-methylcytidine(1402) in 16S rRNA + S-adenosyl-L-homocysteine + H(+). Its function is as follows. Specifically methylates the N4 position of cytidine in position 1402 (C1402) of 16S rRNA. This is Ribosomal RNA small subunit methyltransferase H from Dichelobacter nodosus (strain VCS1703A).